A 544-amino-acid polypeptide reads, in one-letter code: Chitin-inducible gibberellin-responsive protein 2 (544 aa).

Residues 1–123 (MADTPTSRMI…VGASCVTEDP (123 aa)) are disordered. Polar residues-rich tracts occupy residues 15 to 30 (NIPSQNLKQFQYSDNP), 63 to 74 (SQATPNKYTLDS), and 86 to 101 (PSSQSFTTRSGSPLSQ). Positions 165-544 (RMMGIPRGNL…RPLVVSSAWH (380 aa)) constitute a GRAS domain. The leucine repeat I (LRI) stretch occupies residues 172–232 (GNLKELLIAC…VARLASSGIS (61 aa)). The tract at residues 251 to 316 (MHFLYEACPY…GGPPTVRITG (66 aa)) is VHIID. Positions 282-286 (IHIID) match the VHIID motif. Positions 332-364 (LVGRRLSHIASLCKVPFEFHPLAISGSKVEAAH) are leucine repeat II (LRII). A PFYRE region spans residues 373 to 467 (LAVNFTLELH…QHCLAREIVN (95 aa)). The segment at 470–544 (ACEGEERAER…RPLVVSSAWH (75 aa)) is SAW.

It belongs to the GRAS family.

The protein resides in the nucleus. Functionally, may play a regulatory role in the early step of oligosaccharide elicitor response, downstream of the membrane-associated high-affinity chitin-binding protein. This is Chitin-inducible gibberellin-responsive protein 2 (CIGR2) from Oryza sativa subsp. japonica (Rice).